We begin with the raw amino-acid sequence, 666 residues long: NAD(P)H-quinone oxidoreductase subunit 5, organellar chromatophore 1 (666 aa).

15 helical membrane-spanning segments follow: residues 8–28, 41–61, 90–110, 121–141, 145–165, 190–210, 220–240, 259–279, 293–313, 328–348, 396–416, 428–448, 497–517, 542–562, and 643–663; these read LVWLIPILPFIGAFLVGFGLI, AALLLISSVGISAVLSFMVLA, VDPIGATMLALVSTVAILVMV, SYVRFFTYLGLFTSSMLALIL, LLEIYVFWELVGMCSYLLIGF, FLLGILGLFWATNSFDFQIVA, GSIPHWAAIALCLLLFMGPMA, TPISALIHAATMVAAGVFLVA, IIVAVIGTITCFLGASIALIQ, LGYMMLAMGCGAPVAGMFHLI, GITFFIGCVAISGIPPLAGFW, SYPLLWGVGLFTAGLTAFYMF, TLPLVILSVPSVLIGFLGSPW, FLPLAIASVMISTCGIVIATI, and GRPQFYALIIFGGVISLIVIF.

Belongs to the complex I subunit 5 family. NDH is composed of at least 16 different subunits, 5 of which are encoded in the nucleus.

It localises to the plastid. Its subcellular location is the organellar chromatophore thylakoid membrane. The enzyme catalyses a plastoquinone + NADH + (n+1) H(+)(in) = a plastoquinol + NAD(+) + n H(+)(out). It carries out the reaction a plastoquinone + NADPH + (n+1) H(+)(in) = a plastoquinol + NADP(+) + n H(+)(out). NDH shuttles electrons from NAD(P)H:plastoquinone, via FMN and iron-sulfur (Fe-S) centers, to quinones in the photosynthetic chain and possibly in a chloroplast respiratory chain. The immediate electron acceptor for the enzyme in this species is believed to be plastoquinone. Couples the redox reaction to proton translocation, and thus conserves the redox energy in a proton gradient. The protein is NAD(P)H-quinone oxidoreductase subunit 5, organellar chromatophore 1 (ndhF1) of Paulinella chromatophora.